The chain runs to 618 residues: Proline--tRNA ligase (618 aa).

This sequence belongs to the class-II aminoacyl-tRNA synthetase family. ProS type 1 subfamily. Homodimer.

Its subcellular location is the cytoplasm. The enzyme catalyses tRNA(Pro) + L-proline + ATP = L-prolyl-tRNA(Pro) + AMP + diphosphate. Catalyzes the attachment of proline to tRNA(Pro) in a two-step reaction: proline is first activated by ATP to form Pro-AMP and then transferred to the acceptor end of tRNA(Pro). As ProRS can inadvertently accommodate and process non-cognate amino acids such as alanine and cysteine, to avoid such errors it has two additional distinct editing activities against alanine. One activity is designated as 'pretransfer' editing and involves the tRNA(Pro)-independent hydrolysis of activated Ala-AMP. The other activity is designated 'posttransfer' editing and involves deacylation of mischarged Ala-tRNA(Pro). The misacylated Cys-tRNA(Pro) is not edited by ProRS. The chain is Proline--tRNA ligase from Streptococcus equi subsp. equi (strain 4047).